The following is a 295-amino-acid chain: Ent-pimara-9(11),15-diene synthase (295 aa).

Belongs to the terpene synthase family. Monomer. It depends on a divalent metal cation as a cofactor.

The enzyme catalyses ent-copalyl diphosphate = ent-pimara-9(11),15-diene + diphosphate. The protein operates within antibiotic biosynthesis. Functionally, involved in viguiepinol biosynthesis. Catalyzes the conversion of copalyl diphosphate (ent-CDP) into pimara-9(11),15-diene (PMD). The sequence is that of Ent-pimara-9(11),15-diene synthase from Streptomyces sp. (strain KO-3988).